The following is a 425-amino-acid chain: UDP-N-acetyl-D-glucosamine 6-dehydrogenase (425 aa).

The NAD(+) site is built by valine 17, aspartate 35, arginine 40, threonine 86, and threonine 121. Cysteine 261 functions as the Nucleophile in the catalytic mechanism. An NAD(+)-binding site is contributed by arginine 332.

Belongs to the UDP-glucose/GDP-mannose dehydrogenase family. As to quaternary structure, homotrimer.

The enzyme catalyses UDP-N-acetyl-alpha-D-glucosamine + 2 NAD(+) + H2O = UDP-2-acetamido-2-deoxy-alpha-D-glucuronate + 2 NADH + 3 H(+). It functions in the pathway capsule biogenesis; capsule polysaccharide biosynthesis. Its pathway is glycan metabolism; Vi-antigen biosynthesis. Functionally, dehydrogenase required for the biosynthesis of the capsular polysaccharide, commonly referred as the Vi antigen, an important virulence factor. Catalyzes the conversion of UDP-N-acetylglucosamine (UDP-GlcNAc) to UDP-N-acetylglucosaminuronic acid (UDP-GlcNAcA). Cannot use UDP-GalNAc, UDP-Glc and UDP-Gal as substrates. In Salmonella typhi, this protein is UDP-N-acetyl-D-glucosamine 6-dehydrogenase.